A 255-amino-acid chain; its full sequence is MARMGGRRHLKTLAAPKFWPVRQRAGIFTVKPSPGPHPIERSIPLLILVRDVLGYAKTAREARKLIAEGHFKIDGRVRRNYKYPVGFMDVIEIVDTGEFYRVLPYPTRFFTLHPISKEEAQFKLGRIEDKSTVKGGHIQLHLHDGRNVLIRVSDPTNPVEAKPYKTLGTVKISIPEQQLLGYAPLEVGSLVIIFGGRNVGRVGRIVSIQPGMRRRGIVTIEDARGEKIQTSLEYVFVIAPPNEEPWISLPEGAWK.

The region spanning 43–115 (IPLLILVRDV…PTRFFTLHPI (73 aa)) is the S4 RNA-binding domain.

It belongs to the eukaryotic ribosomal protein eS4 family.

The protein is Small ribosomal subunit protein eS4 of Hyperthermus butylicus (strain DSM 5456 / JCM 9403 / PLM1-5).